The primary structure comprises 185 residues: UPF0397 protein LBA0922 (185 aa).

5 helical membrane-spanning segments follow: residues 11–31 (VVAIGIGSAIYVILARFTSIP), 45–65 (FLAFFASIYGATVGFSVGFIG), 72–92 (IMYGQTWWSWVLATGILGWII), 111–131 (IILFNIVQIIANILAWIVVAP), and 146–166 (FVQGISATISNGISILIIGTI).

This sequence belongs to the UPF0397 family.

It is found in the cell membrane. The protein is UPF0397 protein LBA0922 of Lactobacillus acidophilus (strain ATCC 700396 / NCK56 / N2 / NCFM).